Consider the following 405-residue polypeptide: MSLYDDLGVETSDSKTEGWSKNFKLLQSQLQVKKAALTQAKSQRTKQSTVLAPVIDLKRGGSSDDRQIADTPPHVAAGLKDPVPSGFSAGEVLIPLADEYDPMFPNDYEKVVKRQREERQRQRELERQKEIEEREKRRKDRHEASGFSRRPDPDSDEDEDYERERRKRSMGGAAIAPPTSLVEKDKELPRDFPYEEDSRPRSQSSKAAIPPPVYEEPDRPRSPTGPSNSFLANMGGTVAHKIMQKYGFREGQGLGKHEQGLSTALSVEKTSKRGGKIIVGDATEKGEAQDASKKSDSNPLTEILKCPTKVVLLRNMVGAGEVDEDLEVETKEECEKYGKVGKCVIFEIPGAPDDEAVRIFLEFERVESAIKAVVDLNGRYFGGRVVKACFYNLDKFRVLDLAEQV.

Position 2 is an N-acetylserine (S2). Phosphoserine is present on S2. A Glycyl lysine isopeptide (Lys-Gly) (interchain with G-Cter in SUMO2) cross-link involves residue K15. Residue K21 is modified to N6-acetyllysine. Glycyl lysine isopeptide (Lys-Gly) (interchain with G-Cter in SUMO2) cross-links involve residues K24 and K33. Position 41 is an N6-acetyllysine; alternate (K41). K41 participates in a covalent cross-link: Glycyl lysine isopeptide (Lys-Gly) (interchain with G-Cter in SUMO2); alternate. Positions 57–68 are enriched in basic and acidic residues; the sequence is LKRGGSSDDRQI. 2 disordered regions span residues 57–88 and 114–233; these read LKRG…SGFS and RQRE…FLAN. K58 participates in a covalent cross-link: Glycyl lysine isopeptide (Lys-Gly) (interchain with G-Cter in SUMO2). Phosphothreonine is present on T71. The segment covering 114-153 has biased composition (basic and acidic residues); it reads RQREERQRQRELERQKEIEEREKRRKDRHEASGFSRRPDP. Phosphoserine is present on residues S155 and S169. The segment covering 182–200 has biased composition (basic and acidic residues); sequence VEKDKELPRDFPYEEDSRP. The residue at position 222 (S222) is a Phosphoserine. One can recognise a G-patch domain in the interval 235–283; the sequence is GGTVAHKIMQKYGFREGQGLGKHEQGLSTALSVEKTSKRGGKIIVGDAT. Phosphothreonine is present on T237. K256 participates in a covalent cross-link: Glycyl lysine isopeptide (Lys-Gly) (interchain with G-Cter in SUMO2). The residue at position 266 (S266) is a Phosphoserine. K276 participates in a covalent cross-link: Glycyl lysine isopeptide (Lys-Gly) (interchain with G-Cter in SUMO2). 2 positions are modified to phosphoserine: S295 and S297. In terms of domain architecture, RRM spans 310–389; it reads VVLLRNMVGA…YFGGRVVKAC (80 aa).

Binds SXL. Associates with the spliceosome. Interacts with SF3B1, SF1 and U2AF2.

It is found in the nucleus. Functionally, splice factor that binds to the single-stranded 3'AG at the exon/intron border and promotes its utilization in the second catalytic step. Involved in the regulation of alternative splicing and the utilization of cryptic splice sites. This chain is Splicing factor 45 (Rbm17), found in Mus musculus (Mouse).